A 280-amino-acid polypeptide reads, in one-letter code: Small ribosomal subunit protein uS2 (280 aa).

This sequence belongs to the universal ribosomal protein uS2 family.

This is Small ribosomal subunit protein uS2 from Desulforapulum autotrophicum (strain ATCC 43914 / DSM 3382 / VKM B-1955 / HRM2) (Desulfobacterium autotrophicum).